A 705-amino-acid polypeptide reads, in one-letter code: Elongation factor G (705 aa).

Residues 8–290 form the tr-type G domain; the sequence is HRYRNIGIMA…GVIHLLPSPA (283 aa). GTP contacts are provided by residues 17–24, 88–92, and 142–145; these read AHIDAGKT, DTPGH, and NKMD.

Belongs to the TRAFAC class translation factor GTPase superfamily. Classic translation factor GTPase family. EF-G/EF-2 subfamily.

It is found in the cytoplasm. Functionally, catalyzes the GTP-dependent ribosomal translocation step during translation elongation. During this step, the ribosome changes from the pre-translocational (PRE) to the post-translocational (POST) state as the newly formed A-site-bound peptidyl-tRNA and P-site-bound deacylated tRNA move to the P and E sites, respectively. Catalyzes the coordinated movement of the two tRNA molecules, the mRNA and conformational changes in the ribosome. This is Elongation factor G from Xylella fastidiosa (strain M12).